A 259-amino-acid polypeptide reads, in one-letter code: tRNA (guanine-N(7)-)-methyltransferase (259 aa).

S-adenosyl-L-methionine-binding positions include Gly80, 103–104 (EL), 136–137 (NS), and Leu156. Asp159 is an active-site residue. Residue 234 to 236 (TEE) coordinates S-adenosyl-L-methionine.

Belongs to the class I-like SAM-binding methyltransferase superfamily. TrmB family.

It localises to the nucleus. The enzyme catalyses guanosine(46) in tRNA + S-adenosyl-L-methionine = N(7)-methylguanosine(46) in tRNA + S-adenosyl-L-homocysteine. Its pathway is tRNA modification; N(7)-methylguanine-tRNA biosynthesis. Functionally, catalyzes the formation of N(7)-methylguanine at position 46 (m7G46) in tRNA. In Oryza sativa subsp. indica (Rice), this protein is tRNA (guanine-N(7)-)-methyltransferase.